A 466-amino-acid polypeptide reads, in one-letter code: Reticulophagy regulator 3 (466 aa).

At 1-80 (MEEAEGVAAA…WCLGLNAAFW (80 aa)) the chain is on the cytoplasmic side. Residue serine 26 is modified to Phosphoserine. The helical transmembrane segment at 81–101 (FFALTSLRFVFLLAFSLMIIV) threads the bilayer. The Lumenal segment spans residues 102-168 (CIDQWKNKIW…LLFKKQNPGK (67 aa)). Residues 169 to 187 (FCLLSCGVLTFLAMLGRYI) form a helical membrane-spanning segment. Residues 188–192 (PGLLL) are Cytoplasmic-facing. Residues 193–211 (SYLMLVIIMMWPLAVYHRL) form a helical membrane-spanning segment. Residues 212–381 (WDRAYVRLKP…ASRNEAALPE (170 aa)) are Lumenal-facing. Residues 244–263 (RRRALHSERATDSHSDSEEE) form a disordered region. The span at 248 to 259 (LHSERATDSHSD) shows a compositional bias: basic and acidic residues. Residue threonine 254 is modified to Phosphothreonine. 2 positions are modified to phosphoserine: serine 258 and serine 260. At threonine 283 the chain carries Phosphothreonine. Serine 285, serine 288, serine 293, and serine 303 each carry phosphoserine. The segment at 285–335 (SEHSDAEVSCTENGTFNLSRGQTPLTEGSEDLDGHSDPEESFARDLPDFPS) is disordered. Polar residues predominate over residues 294–310 (CTENGTFNLSRGQTPLT). 2 positions are modified to phosphothreonine: threonine 307 and threonine 310. A phosphoserine mark is found at serine 313, serine 320, and serine 360. Basic and acidic residues predominate over residues 316–331 (LDGHSDPEESFARDLP). Residues 382 to 401 (LLLSSLPGGSNLTSNLASLV) traverse the membrane as a helical segment. The Cytoplasmic portion of the chain corresponds to 402–466 (SQGMIQLALS…QLDPASSRSH (65 aa)). The segment at 412–444 (EASQTDPSGPPPRRATRGFLRAPSSDLDTDAEG) is disordered. At threonine 440 the chain carries Phosphothreonine. An LIR motif motif is present at residues 445–450 (DDFELL).

Belongs to the RETREG family. As to quaternary structure, interacts with ATG8 family modifier proteins MAP1LC3A, MAP1LC3B, GABARAPL1 and GABARAPL2. Also interacts with ATG8 family modifier protein GABARAP. Interacts with CANX. Interacts with RTN4 isoform B. Widely expressed with highest levels in brain, lung, liver, muscle and spleen (protein level). Mainly expressed in the central nervous system and in parenchymatous organs including liver, lung and kidney.

The protein localises to the endoplasmic reticulum membrane. In terms of biological role, endoplasmic reticulum (ER)-anchored autophagy regulator which exists in an inactive state under basal conditions but is activated following cellular stress. When activated, induces ER fragmentation and mediates ER delivery into lysosomes through sequestration into autophagosomes via interaction with ATG8 family proteins. Promotes ER membrane curvature and ER tubulation required for subsequent ER fragmentation and engulfment into autophagosomes. Required for collagen quality control in a LIR motif-dependent manner. Mediates NRF1-enhanced neurite outgrowth. The sequence is that of Reticulophagy regulator 3 (Retreg3) from Mus musculus (Mouse).